Consider the following 41-residue polypeptide: Large ribosomal subunit protein bL36 (41 aa).

This sequence belongs to the bacterial ribosomal protein bL36 family.

In Orientia tsutsugamushi (strain Boryong) (Rickettsia tsutsugamushi), this protein is Large ribosomal subunit protein bL36.